The chain runs to 414 residues: Probable mannose-1-phosphate guanyltransferase (414 aa).

This sequence belongs to the transferase hexapeptide repeat family.

It localises to the cytoplasm. It is found in the nucleus. The catalysed reaction is alpha-D-mannose 1-phosphate + GTP + H(+) = GDP-alpha-D-mannose + diphosphate. It participates in nucleotide-sugar biosynthesis; GDP-alpha-D-mannose biosynthesis; GDP-alpha-D-mannose from alpha-D-mannose 1-phosphate (GTP route): step 1/1. Involved in cell wall synthesis where it is required for glycosylation. This chain is Probable mannose-1-phosphate guanyltransferase, found in Schizosaccharomyces pombe (strain 972 / ATCC 24843) (Fission yeast).